A 406-amino-acid polypeptide reads, in one-letter code: L-carnitine CoA-transferase (406 aa).

Positions 98 and 105 each coordinate CoA. The active-site Nucleophile is Asp-170.

Belongs to the CoA-transferase III family. CaiB subfamily. As to quaternary structure, homodimer.

The protein resides in the cytoplasm. It carries out the reaction crotonobetainyl-CoA + (R)-carnitine = crotonobetaine + (R)-carnitinyl-CoA. It catalyses the reaction 4-(trimethylamino)butanoyl-CoA + (R)-carnitine = (R)-carnitinyl-CoA + 4-(trimethylamino)butanoate. It participates in amine and polyamine metabolism; carnitine metabolism. Its function is as follows. Catalyzes the reversible transfer of the CoA moiety from gamma-butyrobetainyl-CoA to L-carnitine to generate L-carnitinyl-CoA and gamma-butyrobetaine. Is also able to catalyze the reversible transfer of the CoA moiety from gamma-butyrobetainyl-CoA or L-carnitinyl-CoA to crotonobetaine to generate crotonobetainyl-CoA. This chain is L-carnitine CoA-transferase (caiB), found in Proteus sp. (strain LE138).